The following is a 413-amino-acid chain: Eukaryotic initiation factor 4A-7 (413 aa).

The Q motif signature appears at 40 to 68; the sequence is DSFDAMGLQENLLRGIYAYGFEKPSAIQQ. A Helicase ATP-binding domain is found at 71 to 241; the sequence is IVPFCKGLDV…RKFMNKPVRI (171 aa). 84 to 91 is a binding site for ATP; it reads AQSGTGKT. The DEAD box motif lies at 189–192; that stretch reads DEAD. The Helicase C-terminal domain maps to 252 to 413; sequence GIKQFYVNVD…ELPANVADLL (162 aa).

Belongs to the DEAD box helicase family. eIF4A subfamily. EIF4F is a multi-subunit complex, the composition of which varies with external and internal environmental conditions. It is composed of at least EIF4A, EIF4E and EIF4G.

It catalyses the reaction ATP + H2O = ADP + phosphate + H(+). Functionally, ATP-dependent RNA helicase which is a subunit of the eIF4F complex involved in cap recognition and is required for mRNA binding to ribosome. In the current model of translation initiation, eIF4A unwinds RNA secondary structures in the 5'-UTR of mRNAs which is necessary to allow efficient binding of the small ribosomal subunit, and subsequent scanning for the initiator codon. This Nicotiana tabacum (Common tobacco) protein is Eukaryotic initiation factor 4A-7.